Reading from the N-terminus, the 880-residue chain is MOG interacting and ectopic P-granules protein 1 (880 aa).

Polar residues predominate over residues methionine 1 to threonine 20. 3 disordered regions span residues methionine 1–aspartate 37, aspartate 82–glutamate 257, and glutamate 350–proline 370. The span at methionine 23–aspartate 37 shows a compositional bias: basic and acidic residues. Over residues alanine 87–valine 105 the composition is skewed to polar residues. A compositionally biased stretch (acidic residues) spans glutamate 108–asparagine 120. 2 stretches are compositionally biased toward basic and acidic residues: residues serine 154 to serine 170 and lysine 183 to threonine 193. Over residues glutamine 215–glutamine 224 the composition is skewed to acidic residues. Composition is skewed to basic and acidic residues over residues glutamine 235–proline 252 and glutamate 350–glutamine 364. 2 consecutive C2H2-type zinc fingers follow at residues serine 436–histidine 459 and phenylalanine 465–histidine 488. A CCHC-type zinc finger spans residues tyrosine 501 to cysteine 523. C2H2-type zinc fingers lie at residues phenylalanine 728–histidine 751, leucine 768–histidine 791, glycine 809–histidine 830, and tyrosine 841–histidine 864.

In terms of assembly, interacts with hda-1, let-418, lin-1, mog-1, mog-4, mog-5, mog-6, pie-1 and unc-98.

The protein localises to the nucleus. Functionally, has a broad role in development, specifically in the genetic pathway SynMuvB that negatively regulates specification of the vulval cell fate. Required for fem-3 3'-UTR-mediated repression in the regulation of the sperm/oocyte switch. Acts by regulating the translation of fem-3 mRNA, by binding to its 3'-UTR. This is MOG interacting and ectopic P-granules protein 1 from Caenorhabditis briggsae.